Consider the following 337-residue polypeptide: tRNA N6-adenosine threonylcarbamoyltransferase (337 aa).

2 residues coordinate Fe cation: His111 and His115. Residues 134–138 (LVSGG), Asp167, Gly180, and Asn272 contribute to the substrate site. Asp300 lines the Fe cation pocket.

It belongs to the KAE1 / TsaD family. It depends on Fe(2+) as a cofactor.

The protein localises to the cytoplasm. It catalyses the reaction L-threonylcarbamoyladenylate + adenosine(37) in tRNA = N(6)-L-threonylcarbamoyladenosine(37) in tRNA + AMP + H(+). In terms of biological role, required for the formation of a threonylcarbamoyl group on adenosine at position 37 (t(6)A37) in tRNAs that read codons beginning with adenine. Is involved in the transfer of the threonylcarbamoyl moiety of threonylcarbamoyl-AMP (TC-AMP) to the N6 group of A37, together with TsaE and TsaB. TsaD likely plays a direct catalytic role in this reaction. The chain is tRNA N6-adenosine threonylcarbamoyltransferase from Yersinia enterocolitica serotype O:8 / biotype 1B (strain NCTC 13174 / 8081).